We begin with the raw amino-acid sequence, 1103 residues long: Activity-dependent neuroprotector homeobox protein (1103 aa).

Glycyl lysine isopeptide (Lys-Gly) (interchain with G-Cter in SUMO2) cross-links involve residues K39 and K72. The segment at 74–97 (FCCSACPFSSKFFSAYKSHFRNVH) adopts a C2H2-type 1; degenerate zinc-finger fold. S98 carries the phosphoserine modification. A C2H2-type 2; degenerate zinc finger spans residues 107 to 129 (LNCPYCTFNADKKTLETHIKIFH). Positions 133–154 (SSAPSSSLSTFKDKNKNDGLKP) are disordered. Basic and acidic residues predominate over residues 143 to 154 (FKDKNKNDGLKP). Residues K144 and K155 each participate in a glycyl lysine isopeptide (Lys-Gly) (interchain with G-Cter in SUMO2) cross-link. Residues 165-188 (YYCKKCTYRDPLYEIVRKHIYREH) form a C2H2-type 3; degenerate zinc finger. Glycyl lysine isopeptide (Lys-Gly) (interchain with G-Cter in SUMO2) cross-links involve residues K203, K231, K266, K274, K278, K279, K311, and K335. A C2H2-type 4; degenerate zinc finger spans residues 221 to 244 (IHCKRCLFMPKSYEALVQHVIEDH). R348 carries the post-translational modification Asymmetric dimethylarginine. The neuroprotective peptide (NAP) stretch occupies residues 354–361 (NAPVSIPQ). Residues 360-439 (PQQSQSVKQL…PAATGPPPSN (80 aa)) form a disordered region. Residues K367 and K408 each participate in a glycyl lysine isopeptide (Lys-Gly) (interchain with G-Cter in SUMO2) cross-link. A compositionally biased stretch (polar residues) spans 393–423 (SLQTANTSSLPPGQVKSPSVSQSQASRVLGQ). 2 positions are modified to phosphoserine: S409 and S413. Residue K427 forms a Glycyl lysine isopeptide (Lys-Gly) (interchain with G-Cter in SUMO2) linkage. Residues 427 to 438 (KPPPAATGPPPS) are compositionally biased toward pro residues. The C2H2-type 5; atypical zinc-finger motif lies at 447 to 469 (KICTICNELFPENVYSVHFEKEH). 2 consecutive C2H2-type zinc fingers follow at residues 489 to 510 (SKCL…MLIH) and 512 to 535 (LSCP…RMVH). Glycyl lysine isopeptide (Lys-Gly) (interchain with G-Cter in SUMO2) cross-links involve residues K600 and K606. Residue S608 is modified to Phosphoserine. Residues K616, K621, K632, and K658 each participate in a glycyl lysine isopeptide (Lys-Gly) (interchain with G-Cter in SUMO2) cross-link. Residues 622–647 (TLCPLCFSILKGPISDALAHHLRERH) form a C2H2-type 8; atypical zinc finger. The C2H2-type 9; atypical zinc-finger motif lies at 662-686 (YKCIHCLGVYTSNMTASTITLHLVH). The segment at 691–712 (GKTQNGQDKTNAPSRLNQSPGL) is disordered. Polar residues predominate over residues 692–710 (KTQNGQDKTNAPSRLNQSP). K699 participates in a covalent cross-link: Glycyl lysine isopeptide (Lys-Gly) (interchain with G-Cter in SUMO2). Residue S709 is modified to Phosphoserine. Glycyl lysine isopeptide (Lys-Gly) (interchain with G-Cter in SUMO2) cross-links involve residues K716, K728, and K731. S738 is subject to Phosphoserine. K745 participates in a covalent cross-link: Glycyl lysine isopeptide (Lys-Gly) (interchain with G-Cter in SUMO2). Residues 754–814 (LDPKGHEDDS…SNKRKKCVRD (61 aa)) constitute a DNA-binding region (homeobox). A Phosphoserine modification is found at S805. Glycyl lysine isopeptide (Lys-Gly) (interchain with G-Cter in SUMO2) cross-links involve residues K807, K829, and K835. The segment at 873–1029 (DSFSDSFEHL…VQDDTEQLKW (157 aa)) is disordered. Residues S876, S878, S886, S889, and S905 each carry the phosphoserine modification. Glycyl lysine isopeptide (Lys-Gly) (interchain with G-Cter in SUMO2) cross-links involve residues K914, K929, and K936. Positions 922–954 (ESEKLDQKEEEDGSKYETIHLTEERAKLMHDAS) are enriched in basic and acidic residues. S954 and S956 each carry phosphoserine. Over residues 972–982 (PSESGPGSRQV) the composition is skewed to polar residues. K1017 participates in a covalent cross-link: Glycyl lysine isopeptide (Lys-Gly) (interchain with G-Cter in SUMO2). N6-acetyllysine; alternate occurs at positions 1036 and 1043. Glycyl lysine isopeptide (Lys-Gly) (interchain with G-Cter in SUMO2); alternate cross-links involve residues K1036 and K1043. Residues 1045–1103 (QSQWENASENAERLPNPQIEWQNSTIDSEDGEQFDSMTDGVADPMHGSLTGVKLSSQQA) are disordered. S1072 bears the Phosphoserine mark.

As to quaternary structure, interacts (via N-terminal region) with beta-catenin/CTNNB1 (via the central armadillo domains); interaction is direct and stabilizes CTNNB1 by modulating its phosphorylation by glycogen synthase kinase-3 beta GSK3B.

The protein localises to the nucleus. It is found in the chromosome. May be involved in transcriptional regulation. May mediate some of the neuroprotective peptide VIP-associated effects involving normal growth and cancer proliferation. Positively modulates WNT-beta-catenin/CTNN1B signaling, acting by regulating phosphorylation of, and thereby stabilizing, CTNNB1. May be required for neural induction and neuronal differentiation. May be involved in erythroid differentiation. This Rattus norvegicus (Rat) protein is Activity-dependent neuroprotector homeobox protein (Adnp).